The primary structure comprises 319 residues: Triacylglycerol lipase (319 aa).

The AB hydrolase-1 domain occupies 10–288 (PVILVHGLAG…TSYHWNHLDE (279 aa)). Leu17 provides a ligand contact to substrate. Ser87 acts as the Nucleophile in catalysis. Substrate is bound at residue Gln88. Cys190 and Cys269 are oxidised to a cystine. A Ca(2+)-binding site is contributed by Asp241. Residues Asp263 and His285 each act as charge relay system in the active site. Residues Asp287, Gln291, and Val295 each contribute to the Ca(2+) site.

Belongs to the AB hydrolase superfamily. Pseudomonas lipase family. As to quaternary structure, monomer. Interacts with lipase-specific foldase Lif. Requires Ca(2+) as cofactor.

The protein resides in the secreted. The enzyme catalyses a triacylglycerol + H2O = a diacylglycerol + a fatty acid + H(+). Functionally, catalyzes the hydrolysis of triacylglycerol. The polypeptide is Triacylglycerol lipase (Pseudarthrobacter phenanthrenivorans (Arthrobacter phenanthrenivorans)).